We begin with the raw amino-acid sequence, 156 residues long: SsrA-binding protein (156 aa).

The segment covering 135-150 (KRDTIKDREWQRDRSR) has biased composition (basic and acidic residues). The disordered stretch occupies residues 135 to 156 (KRDTIKDREWQRDRSRIMKKNT).

This sequence belongs to the SmpB family.

Its subcellular location is the cytoplasm. Its function is as follows. Required for rescue of stalled ribosomes mediated by trans-translation. Binds to transfer-messenger RNA (tmRNA), required for stable association of tmRNA with ribosomes. tmRNA and SmpB together mimic tRNA shape, replacing the anticodon stem-loop with SmpB. tmRNA is encoded by the ssrA gene; the 2 termini fold to resemble tRNA(Ala) and it encodes a 'tag peptide', a short internal open reading frame. During trans-translation Ala-aminoacylated tmRNA acts like a tRNA, entering the A-site of stalled ribosomes, displacing the stalled mRNA. The ribosome then switches to translate the ORF on the tmRNA; the nascent peptide is terminated with the 'tag peptide' encoded by the tmRNA and targeted for degradation. The ribosome is freed to recommence translation, which seems to be the essential function of trans-translation. The chain is SsrA-binding protein from Legionella pneumophila (strain Corby).